The primary structure comprises 64 residues: Prokaryotic ubiquitin-like protein Pup (64 aa).

The disordered stretch occupies residues 1–37 (MAQEQTKRGGGGGDDDDIAGSTAAGQERREKLTEETD). An ARC ATPase binding region spans residues 21-58 (STAAGQERREKLTEETDDLLDEIDDVLEENAEDFVRAY). The stretch at 23-52 (AAGQERREKLTEETDDLLDEIDDVLEENAE) forms a coiled coil. Deamidated glutamine is present on Gln-64. Gln-64 participates in a covalent cross-link: Isoglutamyl lysine isopeptide (Gln-Lys) (interchain with K-? in acceptor proteins).

It belongs to the prokaryotic ubiquitin-like protein family. In terms of assembly, strongly interacts with the proteasome-associated ATPase ARC through a hydrophobic interface; the interacting region of Pup lies in its C-terminal half. There is one Pup binding site per ARC hexamer ring. Is modified by deamidation of its C-terminal glutamine to glutamate by the deamidase Dop, a prerequisite to the subsequent pupylation process.

The protein operates within protein degradation; proteasomal Pup-dependent pathway. Protein modifier that is covalently attached to lysine residues of substrate proteins, thereby targeting them for proteasomal degradation. The tagging system is termed pupylation. The chain is Prokaryotic ubiquitin-like protein Pup from Mycobacterium tuberculosis (strain ATCC 25177 / H37Ra).